The sequence spans 305 residues: RNA-binding protein with serine-rich domain 1 (305 aa).

Residues 1 to 10 (MDLSGVKKKS) are compositionally biased toward basic residues. A necessary for interaction with SRP54, nuclear localization and exon-skipping region spans residues 1 to 161 (MDLSGVKKKS…KRRSPSPKPT (161 aa)). Residues 1-170 (MDLSGVKKKS…TKVHIGRLTR (170 aa)) are disordered. Positions 1–220 (MDLSGVKKKS…ENPDEAEKAL (220 aa)) are necessary for interaction with the cleaved p110 isoform of CDC2L1. Glycyl lysine isopeptide (Lys-Gly) (interchain with G-Cter in SUMO2) cross-links involve residues K7 and K15. Over residues 33 to 59 (DRSDEKSKDRSKDKGATKESSEKDRGR) the composition is skewed to basic and acidic residues. Phosphoserine; by CK2 is present on S53. Low complexity predominate over residues 68–126 (ASSGSSSTRSRSSSTSSSGSSTSTGSSSGSSSSSASSRSGSSSTSRSSSSSSSSGSPSP). Residues 69–121 (SSGSSSTRSRSSSTSSSGSSTSTGSSSGSSSSSASSRSGSSSTSRSSSSSSSS) are necessary for interactions with UPF2 and UPF3B and UPF2-dependent NMD. Basic residues-rich tracts occupy residues 127–143 (SRRRHDNRRRSRSKSKP) and 151–167 (RKRRSPSPKPTKVHIGR). 2 positions are modified to phosphoserine: S155 and S157. Residues 156-242 (PSPKPTKVHI…ITATAVLAPW (87 aa)) form a necessary for interaction with PNN and exon-skipping region. Positions 159–244 (KPTKVHIGRL…ATAVLAPWPR (86 aa)) are interaction with SAP18 and ACIN1. T161 is subject to Phosphothreonine. The RRM domain maps to 161–240 (TKVHIGRLTR…QEITATAVLA (80 aa)). An N6-acetyllysine modification is found at K218. Residues 238–305 (VLAPWPRPPP…RSRSSSNSSR (68 aa)) are necessary for interaction with TRA2B, nuclear localization and exon-skipping. Residues 240 to 305 (APWPRPPPRR…RSRSSSNSSR (66 aa)) are disordered. Pro residues predominate over residues 242–262 (WPRPPPRRFSPPRRMLPPPPM). Positions 266–298 (SPPRMRRRSRSPRRRSPVRRRSRSPGRRRHRSR) are enriched in basic residues.

It belongs to the splicing factor SR family. In terms of assembly, found in mRNA splicing-dependent exon junction complexes (EJC). Found in a post-splicing complex with NXF1, RBM8A, UPF1, UPF2, UPF3A, UPF3B and RNPS1. Component of the heterotrimeric ASAP (apoptosis- and splicing-associated protein) and PSAP complexes consisting of RNPS1, SAP18 and either ACIN1 or PNN, respectively; the ASAP and PSAP complexes probably are formed mutually exclusive. Component of the active spliceosome. Associates with polysomes. Interacts with the cleaved p110 isoform of CDC2L1, CSNK2A1, PNN, SART3, SRP54, SRRM1 and TRA2B/SFRS10. Post-translationally, phosphorylated on one or more of the four Ser/Thr residues (Ser-43, Thr-49, Ser-52 or Ser-53). Ser-53 phosphorylation site is important for splicing and translation stimulation activity in vitro. As to expression, ubiquitous.

Its subcellular location is the nucleus. It localises to the nucleus speckle. The protein resides in the cytoplasm. Its function is as follows. Part of pre- and post-splicing multiprotein mRNP complexes. Auxiliary component of the splicing-dependent multiprotein exon junction complex (EJC) deposited at splice junction on mRNAs. The EJC is a dynamic structure consisting of core proteins and several peripheral nuclear and cytoplasmic associated factors that join the complex only transiently either during EJC assembly or during subsequent mRNA metabolism. Component of the ASAP and PSAP complexes which bind RNA in a sequence-independent manner and are proposed to be recruited to the EJC prior to or during the splicing process and to regulate specific excision of introns in specific transcription subsets. The ASAP complex can inhibit RNA processing during in vitro splicing reactions. The ASAP complex promotes apoptosis and is disassembled after induction of apoptosis. Enhances the formation of the ATP-dependent A complex of the spliceosome. Involved in both constitutive splicing and, in association with SRP54 and TRA2B/SFRS10, in distinctive modulation of alternative splicing in a substrate-dependent manner. Involved in the splicing modulation of BCL2L1/Bcl-X (and probably other apoptotic genes); specifically inhibits formation of proapoptotic isoforms such as Bcl-X(S); the activity is different from the established EJC assembly and function. Participates in mRNA 3'-end cleavage. Involved in UPF2-dependent nonsense-mediated decay (NMD) of mRNAs containing premature stop codons. Also mediates increase of mRNA abundance and translational efficiency. Binds spliced mRNA 20-25 nt upstream of exon-exon junctions. In Homo sapiens (Human), this protein is RNA-binding protein with serine-rich domain 1 (RNPS1).